A 674-amino-acid polypeptide reads, in one-letter code: Glutaminase kidney isoform, mitochondrial (674 aa).

A mitochondrion-targeting transit peptide spans 1 to 54 (MMRLRGSAMLRELLLRPPAAVGAVLRRAQPLGTLCRRPRGGSRPTAGLVAAARL). A disordered region spans residues 56–123 (PWWGGGGRAK…PGETDAFGNS (68 aa)). Residues 58–71 (WGGGGRAKGPGAGG) show a composition bias toward gly residues. The segment covering 89–101 (PPQQQQQQQQQPG) has biased composition (low complexity). N6-succinyllysine is present on residues Lys135 and Lys169. Ser291 lines the substrate pocket. Lys316 bears the N6-acetyllysine mark. Positions 320–327 (GLRFNKLF) are highly mobile activation loop. Asn340, Glu386, Asn393, Tyr419, Tyr471, and Val489 together coordinate substrate. ANK repeat units lie at residues 590 to 619 (DSRT…VNPF) and 624 to 653 (WNNT…QYTP). The interval 652–674 (TPQGDSDDGKGNQTVHKNLDGLL) is disordered. Phosphoserine is present on Ser657.

Belongs to the glutaminase family. Homotetramer, dimer of dimers. The tetramers can assemble into rod-like oligomers (in vitro), but the physiological significance of this is not clear. Interacts with RAF1 and MAP2K2. Interacts with ATCAY; the interaction is direct and may control GLS localization, negatively regulating its activity. In terms of processing, synthesized as a 74-kDa cytosolic precursor which is proteolytically processed by the mitochondrial-processing peptidase (MPP) via a 72-kDa intermediate to yield the mature mitochondrial 68- and 65-kDa subunits.

The protein localises to the mitochondrion. It is found in the cytoplasm. Its subcellular location is the cytosol. It localises to the mitochondrion matrix. The catalysed reaction is L-glutamine + H2O = L-glutamate + NH4(+). With respect to regulation, isoform 1 and isoform 2 are activated by phosphate, due to increased affinity for glutamine. At phosphate concentrations above 10 mM, isoform 2 is more efficient than isoform 1. Functionally, catalyzes the first reaction in the primary pathway for the renal catabolism of glutamine. Plays a role in maintaining acid-base homeostasis. Regulates the levels of the neurotransmitter glutamate, the main excitatory neurotransmitter in the brain. This is Glutaminase kidney isoform, mitochondrial (Gls) from Mus musculus (Mouse).